The primary structure comprises 663 residues: Probable rhamnogalacturonate lyase B (663 aa).

Positions methionine 1–alanine 19 are cleaved as a signal peptide. N-linked (GlcNAc...) asparagine glycosylation is found at asparagine 27, asparagine 110, asparagine 143, asparagine 239, asparagine 285, asparagine 495, asparagine 535, asparagine 569, asparagine 597, and asparagine 638.

It belongs to the polysaccharide lyase 4 family.

It localises to the secreted. It catalyses the reaction Endotype eliminative cleavage of L-alpha-rhamnopyranosyl-(1-&gt;4)-alpha-D-galactopyranosyluronic acid bonds of rhamnogalacturonan I domains in ramified hairy regions of pectin leaving L-rhamnopyranose at the reducing end and 4-deoxy-4,5-unsaturated D-galactopyranosyluronic acid at the non-reducing end.. In terms of biological role, pectinolytic enzymes consist of four classes of enzymes: pectin lyase, polygalacturonase, pectin methylesterase and rhamnogalacturonase. Degrades the rhamnogalacturonan I (RG-I) backbone of pectin. In Aspergillus flavus (strain ATCC 200026 / FGSC A1120 / IAM 13836 / NRRL 3357 / JCM 12722 / SRRC 167), this protein is Probable rhamnogalacturonate lyase B (rglB).